We begin with the raw amino-acid sequence, 965 residues long: Probable serine/threonine-protein kinase DDB_G0291516 (965 aa).

A disordered region spans residues 114-170 (KDSQKELLPSPQQLTPPTSLPSLPLLPLPQAPEQNEEQQLTQPPSPPSIPPPPPQKK). Low complexity-rich tracts occupy residues 119–136 (ELLP…LPSL) and 144–155 (APEQNEEQQLTQ). Positions 156–168 (PPSPPSIPPPPPQ) are enriched in pro residues. ANK repeat units lie at residues 271–301 (KGET…HMGI) and 310–339 (LNKN…PLKM). The Protein kinase domain maps to 459 to 739 (IDFHTQIGSA…NVKAIKKEFL (281 aa)). ATP is bound by residues 465–473 (IGSAGNASV) and Lys486. Asp587 (proton acceptor) is an active-site residue. A helical transmembrane segment spans residues 653 to 673 (IYSLGIILWELVCVAMTGTYI). 8 N-linked (GlcNAc...) asparagine glycosylation sites follow: Asn760, Asn765, Asn905, Asn909, Asn910, Asn914, Asn934, and Asn938. Positions 881–940 (NINKNKNNNNNNNNNNNNNNNINNNNTFNNSTNNNSNDNINIPYDFNNNNNNNNNSCNNS) are enriched in low complexity. The disordered stretch occupies residues 881–942 (NINKNKNNNN…NNNSCNNSKK (62 aa)).

It belongs to the protein kinase superfamily. Ser/Thr protein kinase family.

The protein resides in the membrane. It carries out the reaction L-seryl-[protein] + ATP = O-phospho-L-seryl-[protein] + ADP + H(+). It catalyses the reaction L-threonyl-[protein] + ATP = O-phospho-L-threonyl-[protein] + ADP + H(+). The protein is Probable serine/threonine-protein kinase DDB_G0291516 of Dictyostelium discoideum (Social amoeba).